A 124-amino-acid polypeptide reads, in one-letter code: Schlafen-like protein (124 aa).

It belongs to the Schlafen family. Subgroup poxviridae B3 subfamily.

The sequence is that of Schlafen-like protein from Homo sapiens (Human).